We begin with the raw amino-acid sequence, 122 residues long: MIQQESRLKVADNSGAKEVLVIKNLGGSWRKFTNIGDIVVCTIKKVTPGGIVKKGQVVKAIIVRTKRGLKRSDGTQIQFSENAVVLIKDDKNPRGTRIFGPIAREVKDAGFVKIASLAPEVL.

This sequence belongs to the universal ribosomal protein uL14 family. Part of the 50S ribosomal subunit. Forms a cluster with proteins L3 and L19. In the 70S ribosome, L14 and L19 interact and together make contacts with the 16S rRNA in bridges B5 and B8.

In terms of biological role, binds to 23S rRNA. Forms part of two intersubunit bridges in the 70S ribosome. The polypeptide is Large ribosomal subunit protein uL14 (Spiroplasma citri).